The sequence spans 335 residues: Beta-1,4-mannooligosaccharide phosphorylase (335 aa).

It belongs to the glycosyl hydrolase 130 family. Homohexamer in solution.

It carries out the reaction [(1-&gt;4)-beta-D-mannosyl](n) + phosphate = [(1-&gt;4)-beta-D-mannosyl](n-1) + alpha-D-mannose 1-phosphate. Its function is as follows. Catalyzes the phosphorolysis of beta-1,4-mannooligosaccharides to mannose 1-phosphate (Man1P) and shorter mannooligosaccharides. Can also catalyze the phosphorolysis of 4-O-beta-D-mannopyranosyl-D-glucopyranose (Man-Glc), but shows higher activity toward longer mannooligosaccharides. Involved in a mannan catabolic pathway which feeds into glycolysis. The polypeptide is Beta-1,4-mannooligosaccharide phosphorylase (Ruminococcus albus (strain ATCC 27210 / DSM 20455 / JCM 14654 / NCDO 2250 / 7)).